A 175-amino-acid chain; its full sequence is E1B protein, small T-antigen (175 aa).

Residues 153–175 (LAEEDEDEEGTTLTTEAEQESSA) form a disordered region.

It belongs to the adenoviridae E1B 19 kDa protein family.

In Mus musculus (Mouse), this protein is E1B protein, small T-antigen.